The primary structure comprises 281 residues: Probable thioesterase gloN (281 aa).

A disordered region spans residues 207 to 233; sequence LDDGSNNSRDLNETSPTETSNDSETQA. The segment covering 210–232 has biased composition (polar residues); it reads GSNNSRDLNETSPTETSNDSETQ.

The protein belongs to the AMT4 thioesterase family.

It functions in the pathway mycotoxin biosynthesis. Functionally, probable thioesterase; part of the gene cluster that mediates the biosynthesis of pneumocandins, lipohexapeptides of the echinocandin family that prevent fungal cell wall formation by non-competitive inhibition of beta-1,3-glucan synthase. The 10,12-dimethylmyristoyl side chain is synthesized by the reducing polyketide synthase gloL/GLPKS4. The thioesterase gloN/GLHYD exclusively interacts with gloL/GLPKS4 to maintain turnover of the polyketide side chain. The 10R,12S-dimethylmyristic acid is then transferred to the first thiolation domain of the nonribosomal peptide synthetase gloA/GLNRPS4 by the acyl-AMP ligase gloD/GLligase, followed by its acylation to L-ornithine to trigger elongation of the cyclic hexapeptide. L-ornithine, 4R-hydroxyl-L-proline (generated from L-proline by the dioxygenase gloF/GLOXY2), 3S-hydroxyl-L-homotyrosine (generated by gloG/GLHtyB, gloH/GLHtyA, gloI/GLHtyC, gloJ/GLHtyD and hydroxylated at C-3 by the dioxygenase gloM/GLOXY1), 3R-hydroxyl-L-glutamine (generated from L-glutamine probably by the dioxygenase gloE/GLOXY3) and 3S-hydroxyl-L-proline (generated from L-proline by the dioxygenase gloF/GLOXY2 to yield pneumocandin B0), or 3S-hydroxyl-4S-methyl-L-proline (generated from L-leucine by the dioxygenase gloC/GLOXY4 to yield pneumocandin A0) are sequentially added to the growing chain. The last C domain of gloA/GLNRPS4 is proposed to be responsible for cyclization by condensation to form the peptide bond between L-ornithine and 3S-hydroxyl-4S-methyl-L-proline (for pneumocandin A0) or 3S-hydroxyl-L-proline (for pneumocandin B0). Finally, the subsequent C-4 hydroxylation of 3S-hydroxyl-L-homotyrosine and L-ornithine dihydroxylation at C-4 and C-5 are performed by the cytochrome P450 monooxygenases gloP/GLP450-1 and gloO/GLP450-2, respectively. The chain is Probable thioesterase gloN from Glarea lozoyensis (strain ATCC 20868 / MF5171).